We begin with the raw amino-acid sequence, 93 residues long: Pyrimidine/purine nucleoside phosphorylase (93 aa).

It belongs to the nucleoside phosphorylase PpnP family.

It catalyses the reaction a purine D-ribonucleoside + phosphate = a purine nucleobase + alpha-D-ribose 1-phosphate. The enzyme catalyses adenosine + phosphate = alpha-D-ribose 1-phosphate + adenine. The catalysed reaction is cytidine + phosphate = cytosine + alpha-D-ribose 1-phosphate. It carries out the reaction guanosine + phosphate = alpha-D-ribose 1-phosphate + guanine. It catalyses the reaction inosine + phosphate = alpha-D-ribose 1-phosphate + hypoxanthine. The enzyme catalyses thymidine + phosphate = 2-deoxy-alpha-D-ribose 1-phosphate + thymine. The catalysed reaction is uridine + phosphate = alpha-D-ribose 1-phosphate + uracil. It carries out the reaction xanthosine + phosphate = alpha-D-ribose 1-phosphate + xanthine. Its function is as follows. Catalyzes the phosphorolysis of diverse nucleosides, yielding D-ribose 1-phosphate and the respective free bases. Can use uridine, adenosine, guanosine, cytidine, thymidine, inosine and xanthosine as substrates. Also catalyzes the reverse reactions. The sequence is that of Pyrimidine/purine nucleoside phosphorylase from Shewanella pealeana (strain ATCC 700345 / ANG-SQ1).